The chain runs to 436 residues: MVVNKGIRLLSTKAARFVPSGGVYPKGFVVGGIHCGVKKDGKSPDLAVLHNTFGQDANAAAVFTKNKFKAAPVQVSAATIKQKNGVGINSIIVNSGNANAVTGQKGMEDARAMAMVTDSVFGDHKDSTLVMSTGVIGNKLPIDNILSGIPKLESQVGDSHDHWLACANAICTTDTFPKLVSKSFEINGNTYTMAGVAKGAGMICPNMATLLGFFVTDAPVSAKALQQILSYATDRSFNSISVDGDMSTNDTIVAIANGAAGGDLIDNNSSCAESYFELQKEVTSFAQKLAQLVVRDGEGATKFITLKVKDALSYKDAKSIASSIANSSLFKTAMFGKDANWGRILCAIGYSDVSTAQSIIPDRTSVTFVPTDGSEPLPLLVDGEPESVDEARAAQILELEDLEIEIDLGTGGGQEAKFWTCDLSHEYVTINGDYRS.

Substrate contacts are provided by T172, K198, T209, E298, N431, and S436. The active-site Nucleophile is T209.

This sequence belongs to the ArgJ family. As to quaternary structure, heterodimer of an alpha and a beta chain. The alpha and beta chains are autoproteolytically processed from a single precursor protein within the mitochondrion.

The protein resides in the mitochondrion matrix. The catalysed reaction is N(2)-acetyl-L-ornithine + L-glutamate = N-acetyl-L-glutamate + L-ornithine. It carries out the reaction L-glutamate + acetyl-CoA = N-acetyl-L-glutamate + CoA + H(+). It participates in amino-acid biosynthesis; L-arginine biosynthesis; L-ornithine and N-acetyl-L-glutamate from L-glutamate and N(2)-acetyl-L-ornithine (cyclic): step 1/1. Its pathway is amino-acid biosynthesis; L-arginine biosynthesis; N(2)-acetyl-L-ornithine from L-glutamate: step 1/4. Its function is as follows. Catalyzes two activities which are involved in the cyclic version of arginine biosynthesis: the synthesis of acetylglutamate from glutamate and acetyl-CoA, and of ornithine by transacetylation between acetylornithine and glutamate. The polypeptide is Arginine biosynthesis bifunctional protein ArgJ, mitochondrial (Meyerozyma guilliermondii (strain ATCC 6260 / CBS 566 / DSM 6381 / JCM 1539 / NBRC 10279 / NRRL Y-324) (Yeast)).